Reading from the N-terminus, the 256-residue chain is MEAQKLSAQEIIQFIGNAEKKTRVKVTLSGMPSFKAAGFLAENGRPNFKALANKGIQVLGDFHTHYSLKIIIGDWQAVRPLLSGLTENKDYTLELEGRNSAVPLLDTREINARIEPGAIIRDQVTIGDSAVIMMGAIINIGAEIGEGTMIDMGAILGGRATVGKNSHIGAGAVLAGVIEPASAEPVRVGDNVLVGANAVVIEGVQVGSGSVVAAGAIVTQDVPENVVVAGVPARIIKEIDEKTQQKTALEDALRNL.

It belongs to the transferase hexapeptide repeat family. DapH subfamily.

It carries out the reaction (S)-2,3,4,5-tetrahydrodipicolinate + acetyl-CoA + H2O = L-2-acetamido-6-oxoheptanedioate + CoA. The protein operates within amino-acid biosynthesis; L-lysine biosynthesis via DAP pathway; LL-2,6-diaminopimelate from (S)-tetrahydrodipicolinate (acetylase route): step 1/3. Its function is as follows. Catalyzes the transfer of an acetyl group from acetyl-CoA to tetrahydrodipicolinate. This chain is 2,3,4,5-tetrahydropyridine-2,6-dicarboxylate N-acetyltransferase, found in Lactococcus lactis subsp. lactis (strain IL1403) (Streptococcus lactis).